A 187-amino-acid polypeptide reads, in one-letter code: MNETQIQRETRQVVEDVLEKTNLKQGALFVLGLSSSEVLGGHIGKESSQEIGELIVETILDILGSRGIHLAVQGCEHVNRALVVERQVAEQFGLEIVSVHPTLHAGGSGQLAAFKFMQDPVEVEFIKAHAGLDIGDTAIGMHVKHVQVPIRPILREIGHAHVTALASRPKLIGGARAHYPQDAIRKF.

Belongs to the UPF0340 family.

This Streptococcus pneumoniae serotype 4 (strain ATCC BAA-334 / TIGR4) protein is UPF0340 protein SP_0663.